A 323-amino-acid polypeptide reads, in one-letter code: Galectin-4 (323 aa).

Galectin domains lie at 19 to 150 (YYKP…INFI) and 194 to 323 (YKTR…YVQI). An a beta-D-galactoside-binding site is contributed by 256–262 (WGAEERK).

As to quaternary structure, monomer.

Functionally, galectin that binds lactose and a related range of sugars. May be involved in the assembly of adherens junctions. This is Galectin-4 (LGALS4) from Sus scrofa (Pig).